A 102-amino-acid chain; its full sequence is Small ribosomal subunit protein uS10 (102 aa).

It belongs to the universal ribosomal protein uS10 family. In terms of assembly, part of the 30S ribosomal subunit.

Involved in the binding of tRNA to the ribosomes. The chain is Small ribosomal subunit protein uS10 from Streptococcus pyogenes serotype M12 (strain MGAS2096).